The primary structure comprises 681 residues: DNA ligase (681 aa).

NAD(+) contacts are provided by residues 34 to 38 (DAEYD), 83 to 84 (SL), and Glu115. Lys117 serves as the catalytic N6-AMP-lysine intermediate. NAD(+) is bound by residues Arg138, Glu185, Lys301, and Lys325. 4 residues coordinate Zn(2+): Cys419, Cys422, Cys437, and Cys443. The region spanning 602-681 (RKSDVLAGQT…AALLALIGER (80 aa)) is the BRCT domain.

The protein belongs to the NAD-dependent DNA ligase family. LigA subfamily. Mg(2+) is required as a cofactor. Mn(2+) serves as cofactor.

It catalyses the reaction NAD(+) + (deoxyribonucleotide)n-3'-hydroxyl + 5'-phospho-(deoxyribonucleotide)m = (deoxyribonucleotide)n+m + AMP + beta-nicotinamide D-nucleotide.. DNA ligase that catalyzes the formation of phosphodiester linkages between 5'-phosphoryl and 3'-hydroxyl groups in double-stranded DNA using NAD as a coenzyme and as the energy source for the reaction. It is essential for DNA replication and repair of damaged DNA. This is DNA ligase from Chloroflexus aggregans (strain MD-66 / DSM 9485).